The following is a 55-amino-acid chain: uncharacterized protein (55 aa).

This is an uncharacterized protein from Clostridium perfringens.